Consider the following 662-residue polypeptide: Glutathione hydrolase 7 (662 aa).

Topologically, residues 1 to 106 (MAAENEASQE…AAECSCRQDG (106 aa)) are cytoplasmic. A phosphoserine mark is found at Ser-17, Ser-72, Ser-79, and Ser-83. The disordered stretch occupies residues 26-90 (SFPRLPEDEP…DGSPLRETRK (65 aa)). A compositionally biased stretch (low complexity) spans 72 to 83 (SSSSEMGSQDGS). Residues 107 to 127 (LTVIVTACLTFATGVTVALVM) traverse the membrane as a helical; Signal-anchor for type II membrane protein segment. The Extracellular segment spans residues 128–662 (QIYFGDPQIF…SPDAAGATIL (535 aa)). Asn-198, Asn-267, Asn-283, Asn-330, Asn-353, Asn-394, Asn-519, Asn-523, and Asn-586 each carry an N-linked (GlcNAc...) asparagine glycan.

This sequence belongs to the gamma-glutamyltransferase family. In terms of assembly, heterodimer composed of the light and heavy chains. The active site is located in the light chain. In terms of processing, cleaved by autocatalysis into a large and a small subunit and the autocatalytic cleavage is essential to the functional activation of the enzyme.

It is found in the membrane. The catalysed reaction is an N-terminal (5-L-glutamyl)-[peptide] + an alpha-amino acid = 5-L-glutamyl amino acid + an N-terminal L-alpha-aminoacyl-[peptide]. It catalyses the reaction glutathione + H2O = L-cysteinylglycine + L-glutamate. It carries out the reaction an S-substituted glutathione + H2O = an S-substituted L-cysteinylglycine + L-glutamate. Its pathway is sulfur metabolism; glutathione metabolism. Functionally, hydrolyzes and transfers gamma-glutamyl moieties from glutathione and other gamma-glutamyl compounds to acceptors. This chain is Glutathione hydrolase 7, found in Mus musculus (Mouse).